The primary structure comprises 166 residues: Small ribosomal subunit protein uS5 (166 aa).

In terms of domain architecture, S5 DRBM spans 12-75 (YIEKLVQVNR…EAARRNMIQV (64 aa)).

The protein belongs to the universal ribosomal protein uS5 family. As to quaternary structure, part of the 30S ribosomal subunit. Contacts proteins S4 and S8.

Its function is as follows. With S4 and S12 plays an important role in translational accuracy. Located at the back of the 30S subunit body where it stabilizes the conformation of the head with respect to the body. In Pseudomonas fluorescens (strain ATCC BAA-477 / NRRL B-23932 / Pf-5), this protein is Small ribosomal subunit protein uS5.